We begin with the raw amino-acid sequence, 614 residues long: Polyamine transporter 2 (614 aa).

Residues 1 to 40 are disordered; it reads MSDQESVVSFNSQNTSMVDVEGQQPQQYVPSKTNSRANQL. Topologically, residues 1-173 are cytoplasmic; the sequence is MSDQESVVSF…WPSWVRWSYT (173 aa). Ser50 carries the post-translational modification Phosphoserine. Residues 99 to 122 show a composition bias toward polar residues; it reads RTASALSRTRTKQLNRTATNSSST. Residues 99 to 144 form a disordered region; the sequence is RTASALSRTRTKQLNRTATNSSSTGKEEMEEEETEEREDQSGENEL. The segment covering 126 to 144 has biased composition (acidic residues); the sequence is EMEEEETEEREDQSGENEL. A helical membrane pass occupies residues 174-194; the sequence is VLLSILVICVAYGSACISGGL. At 195–206 the chain is on the extracellular side; sequence GTVEKKYHVGME. A helical transmembrane segment spans residues 207 to 227; sequence AAILSCSLMVIGFSLGPLIWS. The Cytoplasmic portion of the chain corresponds to 228-236; that stretch reads PVSDLYGRR. Residues 237–257 form a helical membrane-spanning segment; that stretch reads VAYFVSMGLYVIFNIPCALAP. At 258-266 the chain is on the extracellular side; the sequence is NLGCLLACR. A helical transmembrane segment spans residues 267–287; that stretch reads FLCGVWSSSGLCLVGGSIADM. Over 288–297 the chain is Cytoplasmic; the sequence is FPSETRGKAI. A helical membrane pass occupies residues 298–318; that stretch reads AFFAFAPYVGPVVGPLVNGFI. Residues 319–326 are Extracellular-facing; the sequence is SVSTGRMD. Residues 327-347 traverse the membrane as a helical segment; the sequence is LIFWVNMAFAGVMWIISSAIP. Residues 348–407 lie on the Cytoplasmic side of the membrane; the sequence is ETYAPVILKRKAARLRKETGNPKIMTEQEAQGVSMSEMMRACLLRPLYFAVTEPVLVATC. The helical transmembrane segment at 408-428 threads the bilayer; it reads FYVCLIYSLLYAFFFAFPVIF. At 429–437 the chain is on the extracellular side; the sequence is GELYGYKDN. The helical transmembrane segment at 438–458 threads the bilayer; sequence LVGLMFIPIVIGALWALATTF. Topologically, residues 459 to 478 are cytoplasmic; the sequence is YCENKYLQIVKQRKPTPEDR. The helical transmembrane segment at 479-499 threads the bilayer; the sequence is LLGAKIGAPFAAIALWILGAT. Residues 500-503 are Extracellular-facing; the sequence is AYKH. A helical transmembrane segment spans residues 504 to 524; that stretch reads IIWVGPASAGLAFGFGMVLIY. At 525–541 the chain is on the cytoplasmic side; sequence YSLNNYIIDCYVQYASS. Residues 542-562 form a helical membrane-spanning segment; that stretch reads ALATKVFLRSAGGAAFPLFTI. Residues 563-574 lie on the Extracellular side of the membrane; sequence QMYHKLNLHWGS. A helical membrane pass occupies residues 575 to 595; it reads WLLAFISTAMIALPFAFSYWG. The Cytoplasmic portion of the chain corresponds to 596–614; the sequence is KGLRHKLSKKDYSIDSVEM.

It belongs to the major facilitator superfamily. DHA1 family. Polyamines/proton antiporter (TC 2.A.1.2.16) subfamily.

Its subcellular location is the cell membrane. Functionally, cell membrane polyamine/proton antiporter, involved in the detoxification of excess polyamines in the cytoplasm. Recognizes spermine, but not spermidine. In Saccharomyces cerevisiae (strain ATCC 204508 / S288c) (Baker's yeast), this protein is Polyamine transporter 2 (TPO2).